A 153-amino-acid polypeptide reads, in one-letter code: Deoxyuridine 5'-triphosphate nucleotidohydrolase (153 aa).

Substrate contacts are provided by residues 71–73 (RSG), asparagine 84, 88–90 (TID), and lysine 98.

The protein belongs to the dUTPase family. Requires Mg(2+) as cofactor.

It catalyses the reaction dUTP + H2O = dUMP + diphosphate + H(+). It participates in pyrimidine metabolism; dUMP biosynthesis; dUMP from dCTP (dUTP route): step 2/2. This enzyme is involved in nucleotide metabolism: it produces dUMP, the immediate precursor of thymidine nucleotides and it decreases the intracellular concentration of dUTP so that uracil cannot be incorporated into DNA. In Wolbachia sp. subsp. Drosophila simulans (strain wRi), this protein is Deoxyuridine 5'-triphosphate nucleotidohydrolase.